Here is a 321-residue protein sequence, read N- to C-terminus: Nitrilase blr3397 (321 aa).

The region spanning 10-277 is the CN hydrolase domain; it reads YKAAVVQAAS…ETILYADIAL (268 aa). The active-site Proton acceptor is the Glu50. The active-site Proton donor is the Lys137. The Nucleophile role is filled by Cys171.

The protein belongs to the carbon-nitrogen hydrolase superfamily. Nitrilase family. In terms of assembly, homodecamer.

It catalyses the reaction an aliphatic nitrile + 2 H2O = a carboxylate + NH4(+). In terms of biological role, nitrilase that acts on various kinds of nitrile compounds such as aliphatic and aromatic nitriles. Has higher activity toward aliphatic nitriles compared to aromatic nitriles. Among the different substrates tested, has the highest activity toward hydrocinnamonitrile. In Bradyrhizobium diazoefficiens (strain JCM 10833 / BCRC 13528 / IAM 13628 / NBRC 14792 / USDA 110), this protein is Nitrilase blr3397.